Here is a 467-residue protein sequence, read N- to C-terminus: MESLAQLPGIFLPLAGCVLALSLSALLAVGPIVRVTPTEVDICDLPAVREIHRVRGGYLKSEWYKSLTPPGVTSLLTLIEPTQYSEWRRLLAGPLSDTSLGKVEPMVTNHVHATIDRIASDLQSQGVSDLYKWWTYMATDVVSELSFGEPIGLLARPKETAWVMDYLDKVGIMHAWRTTFPFVFVLGRFMPVHPFKHAIQAIGLLGKWARRSIQQYRQHIQEQPESPKPTLFTKLFKADKFDDFQLTYLAGSYITAGSHTTAVTLLYLIYAICRDNEIRQKLLAEIRTLPENFRHDELRHLPYLNQVITETLRKYAVVSSALPRVVPAGGATLAGYYLPGGTTVSTQAYTLHRNEAIFPNPEKYKPNPKYSYLSMLSVWLIECRFDPSRWESPTQEMKDAYMPFGGASRMCIGNSLALMEIRLTTTLFLRRFPEVQMSRQNGMRDEDLAQEQYLIMAPRGHRLLVEA.

Positions 1 to 28 (MESLAQLPGIFLPLAGCVLALSLSALLA) are cleaved as a signal peptide. Residue Cys411 coordinates heme.

This sequence belongs to the cytochrome P450 family. Heme serves as cofactor.

Its pathway is secondary metabolite biosynthesis. Its function is as follows. Cytochrome P450 monooxygenase; part of the gene cluster that mediates the biosynthesis of azaphilones, a class of fungal metabolites characterized by a highly oxygenated pyrano-quinone bicyclic core and exhibiting a broad range of bioactivities. In the first step, the non-reducing polyketide synthase azaA forms the hexaketide precursor from successive condensations of five malonyl-CoA units, presumably with a simple acetyl-CoA starter unit. The reactive polyketide chain then undergoes a PT-mediated C2-C7 cyclization to afford the aromatic ring and is eventually released as an aldehyde through the R-domain. The putative ketoreductase azaE is proposed to catalyze the reduction of the terminal ketone resulting in the early culture product FK17-P2a. The monooxygenase azaH was demonstrated to be the only enzyme required to convert FK17-P2a to azanigerone E. AzaH first hydroxylates the benzaldehyde intermediate FK17-P2a at C4, which triggers the formation of the pyran-ring to afford azanigerone E. In parallel, the 2,4-dimethylhexanoyl chain is synthesized by the HR-PKS azaB and is proposed to be transferred to the C4-hydroxyl of azanigerone E by the acyltransferase azaD directly from the ACP domain of azaB. Alternatively, the 2,4-dimethyl-hexanoyl chain may be offloaded from the HR-PKS as a carboxylic acid and converted to an acyl-CoA by azaF. The resulting acyl-CoA molecule could then be taken up as a substrate by AzaD to form azanigerone B. To yield the carboxylic acid substituent in azanigerone A, the hydroxypropyl side chain of azanigerone B would need to undergo a C-C oxidative cleavage catalyzed by cytochrome P450 AzaI. AzaI is proposed to act on a vicinal diol that leads to a C-C bond scission either through an alkoxyradical intermediate or a peroxy complex. In the biosynthesis of azanigerone A, azanigerone B first undergoes hydroxylation at C10, possibly catalyzed by one of the two FAD-dependent monooxygenases encoded in the cluster, azaG or azaL, resulting in the vicinal diol azanigerone C. Oxidative cleavage of azanigerone C by azaI would yield the corresponding aldehyde derivative of azanigerone A. Finally, the dehydrogenase azaJ is proposed to convert the aldehyde functional group into the carboxylic acid, completing the conversion from azanigerone B to azanigerone A. Alternatively, the oxidation of aldehyde to carboxylic acid may be catalyzed by the same P450 enzyme azaI via consecutive oxidation or by endogenous alcohol dehydrogenase. This Aspergillus niger (strain ATCC 1015 / CBS 113.46 / FGSC A1144 / LSHB Ac4 / NCTC 3858a / NRRL 328 / USDA 3528.7) protein is Cytochrome P450 monooxygenase azaI.